The primary structure comprises 215 residues: Pyrrolidone-carboxylate peptidase (215 aa).

Residues Glu-80, Cys-143, and His-167 contribute to the active site.

The protein belongs to the peptidase C15 family. As to quaternary structure, homotetramer.

The protein resides in the cytoplasm. It carries out the reaction Release of an N-terminal pyroglutamyl group from a polypeptide, the second amino acid generally not being Pro.. Functionally, removes 5-oxoproline from various penultimate amino acid residues except L-proline. The protein is Pyrrolidone-carboxylate peptidase of Bacillus cereus (strain B4264).